A 37-amino-acid chain; its full sequence is Esculentin-2JDb (37 aa).

Cysteines 31 and 37 form a disulfide.

As to expression, expressed by the skin glands.

Its subcellular location is the secreted. In terms of biological role, has antibacterial activity against E.coli and S.aureus strains. The polypeptide is Esculentin-2JDb (Odorrana jingdongensis (Jingdong frog)).